We begin with the raw amino-acid sequence, 379 residues long: Acetylajmalan esterase 1 (379 aa).

Residues 1–20 (MGFAPLLVFSLFVFAGTTKG) form the signal peptide. The active-site Nucleophile is the Ser-34. Asn-96, Asn-178, Asn-197, and Asn-291 each carry an N-linked (GlcNAc...) asparagine glycan. Residues Asp-332 and His-335 contribute to the active site.

It belongs to the 'GDSL' lipolytic enzyme family. As to expression, expressed in roots and leaves at low levels.

The enzyme catalyses 17-O-acetylnorajmaline + H2O = norajmaline + acetate + H(+). It catalyses the reaction 17-O-acetylajmaline + H2O = ajmaline + acetate + H(+). Its pathway is alkaloid biosynthesis; ajmaline biosynthesis. Its function is as follows. Acetylesterase involved in the biosynthesis of ajmaline-type monoterpenoid indole alkaloids (MIAs) natural products, important plant-derived pharmaceuticals used in the therapy of heart disorders. Deacetylates 17-O-acetylnorajmaline to produce norajmaline. May also catalyze the conversion of 17-O-acetylajmaline to ajmaline. The chain is Acetylajmalan esterase 1 from Rauvolfia serpentina (Serpentine wood).